We begin with the raw amino-acid sequence, 101 residues long: Small ribosomal subunit protein uS14 (101 aa).

The protein belongs to the universal ribosomal protein uS14 family. Part of the 30S ribosomal subunit. Contacts proteins S3 and S10.

Functionally, binds 16S rRNA, required for the assembly of 30S particles and may also be responsible for determining the conformation of the 16S rRNA at the A site. This chain is Small ribosomal subunit protein uS14, found in Stenotrophomonas maltophilia (strain K279a).